A 416-amino-acid polypeptide reads, in one-letter code: DNA-guanine transglycosylase (416 aa).

Residue D95 is the Proton acceptor of the active site. Catalysis depends on D256, which acts as the Nucleophile. C368, C370, C373, and H395 together coordinate Zn(2+).

This sequence belongs to the DNA-guanine transglycosylase family. It depends on Zn(2+) as a cofactor.

Part of the dpd cluster involved in the insertion of 7-deazaguanine derivatives in DNA. DpdA may insert 7-cyano-7-deazaguanine (preQ0) into DNA with the help of DpdB. DpdA and dpdB are necessary and sufficient to synthesize 2'-deoxy-7-cyano-7-deazaguanosine (dPreQ0). The chain is DNA-guanine transglycosylase from Salmonella montevideo.